Consider the following 419-residue polypeptide: Thymidine phosphorylase (419 aa).

Belongs to the thymidine/pyrimidine-nucleoside phosphorylase family. As to quaternary structure, homodimer.

The enzyme catalyses thymidine + phosphate = 2-deoxy-alpha-D-ribose 1-phosphate + thymine. Its function is as follows. The enzymes which catalyze the reversible phosphorolysis of pyrimidine nucleosides are involved in the degradation of these compounds and in their utilization as carbon and energy sources, or in the rescue of pyrimidine bases for nucleotide synthesis. This chain is Thymidine phosphorylase (deoA), found in Mycoplasmoides pirum (Mycoplasma pirum).